The sequence spans 279 residues: Tryptophan synthase alpha chain (279 aa).

Residues glutamate 63 and aspartate 74 each act as proton acceptor in the active site.

Belongs to the TrpA family. As to quaternary structure, tetramer of two alpha and two beta chains.

The catalysed reaction is (1S,2R)-1-C-(indol-3-yl)glycerol 3-phosphate + L-serine = D-glyceraldehyde 3-phosphate + L-tryptophan + H2O. The protein operates within amino-acid biosynthesis; L-tryptophan biosynthesis; L-tryptophan from chorismate: step 5/5. In terms of biological role, the alpha subunit is responsible for the aldol cleavage of indoleglycerol phosphate to indole and glyceraldehyde 3-phosphate. This chain is Tryptophan synthase alpha chain, found in Prochlorococcus marinus subsp. pastoris (strain CCMP1986 / NIES-2087 / MED4).